The chain runs to 122 residues: Large ribosomal subunit protein uL14 (122 aa).

Belongs to the universal ribosomal protein uL14 family. In terms of assembly, part of the 50S ribosomal subunit. Forms a cluster with proteins L3 and L19. In the 70S ribosome, L14 and L19 interact and together make contacts with the 16S rRNA in bridges B5 and B8.

Its function is as follows. Binds to 23S rRNA. Forms part of two intersubunit bridges in the 70S ribosome. In Baumannia cicadellinicola subsp. Homalodisca coagulata, this protein is Large ribosomal subunit protein uL14.